The chain runs to 515 residues: Alpha,alpha-trehalose-phosphate synthase [UDP-forming] 1 (515 aa).

Y97 and D151 together coordinate D-glucose 6-phosphate. 2 residues coordinate UDP: R287 and K292. Residues R287 and K292 each contribute to the UDP-alpha-D-glucose site. A D-glucose 6-phosphate-binding site is contributed by R325. UDP-binding positions include V364 and 390-394 (LVAYE). 386 to 394 (DGMNLVAYE) lines the UDP-alpha-D-glucose pocket. The interval 483-515 (GKFQSRKAKLPESADAEKPMNGSGESEESQTTQ) is disordered. Residues 491 to 500 (KLPESADAEK) are compositionally biased toward basic and acidic residues.

Belongs to the glycosyltransferase 20 family.

It carries out the reaction D-glucose 6-phosphate + UDP-alpha-D-glucose = alpha,alpha-trehalose 6-phosphate + UDP + H(+). It participates in carbohydrate biosynthesis. In terms of biological role, synthase catalytic subunit of the trehalose synthase complex that catalyzes the production of trehalose from glucose-6-phosphate and UDP-alpha-D-glucose in a two step process. The disaccharide trehalose serves as a storage carbohydrate that is mobilized during conidial germination. Regulates the level of trehalose as a protectant for cell integrity during thermal and oxidative stress. This chain is Alpha,alpha-trehalose-phosphate synthase [UDP-forming] 1, found in Aspergillus fumigatus (strain ATCC MYA-4609 / CBS 101355 / FGSC A1100 / Af293) (Neosartorya fumigata).